Consider the following 234-residue polypeptide: Sugar fermentation stimulation protein homolog (234 aa).

The protein belongs to the SfsA family.

This Shewanella sp. (strain ANA-3) protein is Sugar fermentation stimulation protein homolog.